Consider the following 269-residue polypeptide: uncharacterized protein (269 aa).

The next 4 helical transmembrane spans lie at 64–84 (FVYF…LAGV), 125–145 (YGIA…FLSF), 169–189 (FFIS…FLVL), and 230–250 (VFAT…IAIF).

The protein resides in the cell membrane. This is an uncharacterized protein from Mycoplasma genitalium (strain ATCC 33530 / DSM 19775 / NCTC 10195 / G37) (Mycoplasmoides genitalium).